The sequence spans 254 residues: Aspartate/glutamate leucyltransferase (254 aa).

The protein belongs to the R-transferase family. Bpt subfamily.

It is found in the cytoplasm. The enzyme catalyses N-terminal L-glutamyl-[protein] + L-leucyl-tRNA(Leu) = N-terminal L-leucyl-L-glutamyl-[protein] + tRNA(Leu) + H(+). It catalyses the reaction N-terminal L-aspartyl-[protein] + L-leucyl-tRNA(Leu) = N-terminal L-leucyl-L-aspartyl-[protein] + tRNA(Leu) + H(+). Functions in the N-end rule pathway of protein degradation where it conjugates Leu from its aminoacyl-tRNA to the N-termini of proteins containing an N-terminal aspartate or glutamate. In Xylella fastidiosa (strain M12), this protein is Aspartate/glutamate leucyltransferase.